A 190-amino-acid polypeptide reads, in one-letter code: MLRVLSILIILLTLSCAQKATFREILGKDTVRARVELVRNPSHNLAIQKVALRNLKDKLLNPPPDVKLKLKVMKKEGKLQLTEGSNADLVISMELKKLRYEEKRYKTKEEDMDITYFCVERQATADVLFNVMNAKSKEVLFAKVYKGGFYKRYCDEKGYKSEKLPKPDFIKLKAIEDAEEAFVREFYSLL.

This is an uncharacterized protein from Aquifex aeolicus (strain VF5).